Consider the following 157-residue polypeptide: Endoribonuclease YbeY (157 aa).

Positions 114, 118, and 124 each coordinate Zn(2+).

It belongs to the endoribonuclease YbeY family. It depends on Zn(2+) as a cofactor.

The protein localises to the cytoplasm. Functionally, single strand-specific metallo-endoribonuclease involved in late-stage 70S ribosome quality control and in maturation of the 3' terminus of the 16S rRNA. This chain is Endoribonuclease YbeY, found in Salmonella agona (strain SL483).